Reading from the N-terminus, the 270-residue chain is PspA protein (270 aa).

The tract at residues 238–270 (MRGEALPAGGTTATPRPATETSGGAIAEQPYGQ) is disordered. The segment covering 240-258 (GEALPAGGTTATPRPATET) has biased composition (low complexity).

Belongs to the PspA/Vipp/IM30 family.

It is found in the cytoplasm. Involved in resistance to stress. Associates with and regulates lipid droplets (LDs) homeostasis under conditions of stress and may regulate non-replicating persistence (NRP). Could be involved in preservation of envelope integrity and tolerance to surface stress. In Mycobacterium tuberculosis (strain ATCC 25177 / H37Ra), this protein is PspA protein.